The primary structure comprises 167 residues: Caffeine dehydrogenase subunit gamma (167 aa).

The region spanning 4–80 is the 2Fe-2S ferredoxin-type domain; it reads HVISLTVNGQ…GHSIRTVEAL (77 aa). [2Fe-2S] cluster is bound by residues C42, C47, C50, and C62.

In terms of assembly, heterotrimer composed of an alpha (CdhA), a beta (CdhB) and a gamma (CdhC) subunit.

It catalyses the reaction caffeine + a ubiquinone + H2O = 1,3,7-trimethylurate + a ubiquinol. The catalysed reaction is ubiquinone-0 + caffeine + H2O = ubiquinol-0 + 1,3,7-trimethylurate. The enzyme catalyses theobromine + a ubiquinone + H2O = 3,7-dimethylurate + a ubiquinol. Component of the caffeine dehydrogenase complex that catalyzes the hydrolytical oxidation of 1,3,7-trimethylxanthine (caffeine) by incorporation of an oxygen atom originating from a water molecule into position C-8 to produce 1,3,7-trimethyluric acid (TMU). Coenzyme Q0 (ubiquinone-0) is the preferred electron acceptor and, to a lesser extent, coenzyme Q2 (ubiquinone-2) can also be used, but oxygen and NAD(P)(+) cannot. Is involved in a caffeine degradation pathway that allows Pseudomonas sp. strain CBB1 to grow on caffeine as the sole carbon and nitrogen source. Is also active with theobromine as substrate, but shows a very poor activity with theophylline and is not active with xanthine, 3-methylxanthine, 7-methylxanthine, TMU, and 3,7-dimethylurate. The polypeptide is Caffeine dehydrogenase subunit gamma (Pseudomonas sp. (strain CBB1)).